A 138-amino-acid chain; its full sequence is Glia maturation factor (138 aa).

Residues 3–138 (DNQICDISNE…TEEWLKAKLK (136 aa)) form the ADF-H domain.

It belongs to the actin-binding proteins ADF family. GMF subfamily. In ovaries, expressed in follicular epithelium, in polar cells, migrating border cells, and centripedal cells (at protein level).

The protein resides in the cell projection. It is found in the lamellipodium. The protein localises to the cytoplasm. It localises to the perinuclear region. Its subcellular location is the nucleus. The protein resides in the cell cortex. Its function is as follows. Inhibits Arp2/3-mediated actin nucleation. Together with flr, promotes Arp2/3-nucleated actin filament array disassembly. Promotes debranching. Regulates lamellipodial protrusion dynamics possibly by facilitating lamellipodial retraction. In egg chambers, enhances the retraction dynamics of cellular extensions in border cells and thus together with flr plays an important role in directional migration of border cell clusters. The chain is Glia maturation factor from Drosophila melanogaster (Fruit fly).